A 221-amino-acid chain; its full sequence is Ribose-5-phosphate isomerase A (221 aa).

Substrate-binding positions include 26–29 (TGST), 81–84 (DGAD), and 94–97 (KGGG). Glutamate 103 (proton acceptor) is an active-site residue. Lysine 121 is a substrate binding site.

This sequence belongs to the ribose 5-phosphate isomerase family. In terms of assembly, homodimer.

The enzyme catalyses aldehydo-D-ribose 5-phosphate = D-ribulose 5-phosphate. It participates in carbohydrate degradation; pentose phosphate pathway; D-ribose 5-phosphate from D-ribulose 5-phosphate (non-oxidative stage): step 1/1. Catalyzes the reversible conversion of ribose-5-phosphate to ribulose 5-phosphate. The sequence is that of Ribose-5-phosphate isomerase A from Bacillus mycoides (strain KBAB4) (Bacillus weihenstephanensis).